We begin with the raw amino-acid sequence, 309 residues long: MSIRHATLHQLKIFAAVARHMSFARAAEELHLTPPALSIQVRQLAEAVGQPLFDQIGKKIYLTAAGEALTSACHDILDRLEYFTQEIAALQGLEKGSLKVATLSTTKYFIPRMLGGFCTEHPGVATVLFIGNREVLLERLARNQDDLYILGQPPEHMNVVAEAFADNPLVVVARLDHPLTQEKDIEPSRLRDVPFILREPGSGTRLAAEKFFEQHGVILKTRMEFGSNEAVKQSVAGGLGITVLSASTIRAELASGKLAILDVRGFPLERKWYAVYPAGKRISPRTKAFMEYLFAASADGENGPSLPKP.

The HTH lysR-type domain occupies Ala6 to Thr63. Residues Phe23–Arg42 constitute a DNA-binding region (H-T-H motif).

The protein belongs to the LysR transcriptional regulatory family.

Trans-acting transcriptional regulator of RuBisCO genes (rbcL1S1) expression. The chain is RuBisCO operon transcriptional regulator (rbcR) from Acidithiobacillus ferrooxidans (Thiobacillus ferrooxidans).